A 373-amino-acid polypeptide reads, in one-letter code: Queuine tRNA-ribosyltransferase (373 aa).

Residue D91 is the Proton acceptor of the active site. Substrate contacts are provided by residues D91–F95, D145, and Q187. Residues G245–D251 form an RNA binding region. D264 serves as the catalytic Nucleophile. The tract at residues T269–R273 is RNA binding; important for wobble base 34 recognition. Residues C302, C304, C307, and H333 each coordinate Zn(2+).

The protein belongs to the queuine tRNA-ribosyltransferase family. As to quaternary structure, homodimer. Within each dimer, one monomer is responsible for RNA recognition and catalysis, while the other monomer binds to the replacement base PreQ1. It depends on Zn(2+) as a cofactor.

It carries out the reaction 7-aminomethyl-7-carbaguanine + guanosine(34) in tRNA = 7-aminomethyl-7-carbaguanosine(34) in tRNA + guanine. The protein operates within tRNA modification; tRNA-queuosine biosynthesis. In terms of biological role, catalyzes the base-exchange of a guanine (G) residue with the queuine precursor 7-aminomethyl-7-deazaguanine (PreQ1) at position 34 (anticodon wobble position) in tRNAs with GU(N) anticodons (tRNA-Asp, -Asn, -His and -Tyr). Catalysis occurs through a double-displacement mechanism. The nucleophile active site attacks the C1' of nucleotide 34 to detach the guanine base from the RNA, forming a covalent enzyme-RNA intermediate. The proton acceptor active site deprotonates the incoming PreQ1, allowing a nucleophilic attack on the C1' of the ribose to form the product. After dissociation, two additional enzymatic reactions on the tRNA convert PreQ1 to queuine (Q), resulting in the hypermodified nucleoside queuosine (7-(((4,5-cis-dihydroxy-2-cyclopenten-1-yl)amino)methyl)-7-deazaguanosine). This chain is Queuine tRNA-ribosyltransferase, found in Syntrophobacter fumaroxidans (strain DSM 10017 / MPOB).